We begin with the raw amino-acid sequence, 1608 residues long: DNA-directed RNA polymerase III subunit rpc2 (1608 aa).

Zn(2+) is bound by residues Cys-1557, Cys-1560, Cys-1569, and Cys-1572. The C4-type zinc finger occupies 1557–1572 (CKNCGFLGYEGYCQYC).

This sequence belongs to the RNA polymerase beta chain family. Component of the RNA polymerase III (Pol III) complex. In terms of processing, this protein undergoes a protein self splicing that involves a post-translational excision of the intervening region (intein) followed by peptide ligation.

It localises to the nucleus. It catalyses the reaction RNA(n) + a ribonucleoside 5'-triphosphate = RNA(n+1) + diphosphate. In terms of biological role, DNA-dependent RNA polymerase catalyzes the transcription of DNA into RNA using the four ribonucleoside triphosphates as substrates. Second largest core component of RNA polymerase III which synthesizes small RNAs, such as 5S rRNA and tRNAs. Proposed to contribute to the polymerase catalytic activity and forms the polymerase active center together with the largest subunit. Pol III is composed of mobile elements and rpc2 is part of the core element with the central large cleft and probably a clamp element that moves to open and close the cleft. This is DNA-directed RNA polymerase III subunit rpc2 (polr3b) from Dictyostelium discoideum (Social amoeba).